The following is a 364-amino-acid chain: Heavy metal-associated isoprenylated plant protein 35 (364 aa).

Positions 1–12 are enriched in basic and acidic residues; that stretch reads MATDEMKSETKK. A disordered region spans residues 1–33; the sequence is MATDEMKSETKKTEHKQKQSTQIKQDLPPPTIP. The 64-residue stretch at 39–102 folds into the HMA domain; the sequence is YKSCTLKVSI…KLNKAGKNAE (64 aa). Positions 50 and 53 each coordinate a metal cation. Residues 101 to 265 are disordered; that stretch reads AEQLPEIPDP…PPTATDYDRP (165 aa). Over residues 111–122 the composition is skewed to basic and acidic residues; the sequence is VDNKPKPVDPKE. The segment covering 134-144 has biased composition (polar residues); that stretch reads QITNEATSSGI. Basic and acidic residues-rich tracts occupy residues 154-169 and 180-198; these read ECDKPESEKPVDEKCL and VKEEKKDVLKEKDSGKEES. Residues 237-253 show a composition bias toward polar residues; sequence SLATTNNPTDGPARTQS. Cys361 carries the cysteine methyl ester modification. Cys361 carries S-farnesyl cysteine lipidation. Positions 362-364 are cleaved as a propeptide — removed in mature form; it reads AIM.

It belongs to the HIPP family.

In terms of biological role, heavy-metal-binding protein. The polypeptide is Heavy metal-associated isoprenylated plant protein 35 (Arabidopsis thaliana (Mouse-ear cress)).